Consider the following 626-residue polypeptide: MTDAVSTTTLLKDRDRLEARLKEIPPEPGVYFMRDANDDILYIGKSKKLRNRVRSYFRQIQDHPPRIELMVHQVADIEFIVTDTEAEALALEANLIKQHQPHFNVLLKDDKKYPYLCVTWSQTYPRIFITRKRRLGKAQDKYYGPYVDVWQLRQTLRLVKRLFPLRQRRKPLFKDRPCLNYEIGRCPGVCQALITPEAYRQILQKVVMIFQGRTSELINTLSLQMEQAAEDLNFEQAARLRDQIKGLQGLGVDQKVALPDDTVSRDAIALAADDQIACVQLFQIRSGRLVGRLGFMADAQSGSLGMILQHVLEAHYGSAEPVELPLEILVQTELPETELLASYLSQRKERKVSITCPQRQIKAELIEMVERNAQYELARTQKSRDRTLNALQDLAELLDLPELPHRIECYDISHIQGSDAVASQVVFIDGLPAKQHYRRYKIRNPNVKAGHSDDFASLAEVLHRRFRQYHLSPEQPRQGTSDWPDLVVIDGGKGQLSAVLESLTKIEVVEDLQIISLAKQREEIFQPGESQPLPTDPEQPGVQLIRRLRDEAHRFAISFHRKKRLERMRRSRLDDIPGLGHHRQKELLAAFRSIDYIREASPEQLKAVPTIGPQLAQKIYDYFHPA.

The region spanning 26–105 (PEPGVYFMRD…IKQHQPHFNV (80 aa)) is the GIY-YIG domain. One can recognise a UVR domain in the interval 215–250 (SELINTLSLQMEQAAEDLNFEQAARLRDQIKGLQGL).

Belongs to the UvrC family. In terms of assembly, interacts with UvrB in an incision complex.

It is found in the cytoplasm. The UvrABC repair system catalyzes the recognition and processing of DNA lesions. UvrC both incises the 5' and 3' sides of the lesion. The N-terminal half is responsible for the 3' incision and the C-terminal half is responsible for the 5' incision. The polypeptide is UvrABC system protein C (Acaryochloris marina (strain MBIC 11017)).